The sequence spans 311 residues: N-acetyl-gamma-glutamyl-phosphate reductase (311 aa).

The active site involves Cys-117.

This sequence belongs to the NAGSA dehydrogenase family. Type 2 subfamily.

The protein localises to the cytoplasm. It catalyses the reaction N-acetyl-L-glutamate 5-semialdehyde + phosphate + NADP(+) = N-acetyl-L-glutamyl 5-phosphate + NADPH + H(+). Its pathway is amino-acid biosynthesis; L-arginine biosynthesis; N(2)-acetyl-L-ornithine from L-glutamate: step 3/4. Catalyzes the NADPH-dependent reduction of N-acetyl-5-glutamyl phosphate to yield N-acetyl-L-glutamate 5-semialdehyde. This Brucella anthropi (strain ATCC 49188 / DSM 6882 / CCUG 24695 / JCM 21032 / LMG 3331 / NBRC 15819 / NCTC 12168 / Alc 37) (Ochrobactrum anthropi) protein is N-acetyl-gamma-glutamyl-phosphate reductase.